The following is a 579-amino-acid chain: Membrane frizzled-related protein (579 aa).

The Cytoplasmic segment spans residues Met1 to Cys69. The chain crosses the membrane as a helical; Signal-anchor for type II membrane protein span at residues Val70 to Ala90. The Extracellular portion of the chain corresponds to Gln91 to Pro579. The tract at residues Ala100–Thr143 is disordered. Low complexity predominate over residues Thr111–Thr121. Residues Ser122 to Thr143 show a composition bias toward polar residues. Disulfide bonds link Cys144/Cys170 and Cys197/Cys216. Residues Cys144–Met253 enclose the CUB 1 domain. Asn227 carries an N-linked (GlcNAc...) asparagine glycan. In terms of domain architecture, LDL-receptor class A 1 spans Ser259–Ser295. 5 cysteine pairs are disulfide-bonded: Cys260-Cys272, Cys267-Cys285, Cys279-Cys294, Cys301-Cys327, and Cys354-Cys377. The CUB 2 domain maps to Cys301 to Phe414. N-linked (GlcNAc...) asparagine glycosylation is present at Asn415. The LDL-receptor class A 2 domain occupies Pro420–Ser455. Intrachain disulfides connect Cys421–Cys433, Cys428–Cys446, Cys440–Cys454, Cys466–Cys528, Cys474–Cys521, Cys512–Cys549, Cys538–Cys576, and Cys542–Cys564. An FZ domain is found at Pro461 to Pro579.

Interacts with C1QTNF5. In terms of tissue distribution, specifically expressed in brain. Strongly expressed in medulla oblongata and to a lower extent in hippocampus and corpus callosum. Expressed in keratinocytes.

It is found in the apical cell membrane. Its function is as follows. May play a role in eye development. The polypeptide is Membrane frizzled-related protein (MFRP) (Homo sapiens (Human)).